The chain runs to 330 residues: Aspartate--ammonia ligase (330 aa).

The protein belongs to the class-II aminoacyl-tRNA synthetase family. AsnA subfamily.

The protein resides in the cytoplasm. It carries out the reaction L-aspartate + NH4(+) + ATP = L-asparagine + AMP + diphosphate + H(+). It participates in amino-acid biosynthesis; L-asparagine biosynthesis; L-asparagine from L-aspartate (ammonia route): step 1/1. The sequence is that of Aspartate--ammonia ligase from Salmonella newport (strain SL254).